Consider the following 2514-residue polypeptide: Highly reducing polyketide synthase sphB (2514 aa).

Positions 66–486 (QVPIAICGMA…GANAHVILES (421 aa)) constitute a Ketosynthase family 3 (KS3) domain. Active-site for beta-ketoacyl synthase activity residues include cysteine 238, histidine 374, and histidine 409. Residues 580–904 (MVFTGQGAQW…AIGALHSLNV (325 aa)) form the Malonyl-CoA:ACP transacylase (MAT) domain. The interval 950–1079 (HDLLGARVAE…GEVCAQSSAP (130 aa)) is N-terminal hotdog fold. In terms of domain architecture, PKS/mFAS DH spans 950–1240 (HDLLGARVAE…AADISDTHAA (291 aa)). Histidine 982 serves as the catalytic Proton acceptor; for dehydratase activity. The tract at residues 1089–1240 (PRTLNVRKWY…AADISDTHAA (152 aa)) is C-terminal hotdog fold. Catalysis depends on aspartate 1150, which acts as the Proton donor; for dehydratase activity. Residues 1319–1578 (WTGLDHEAIS…EPHQVTTTMV (260 aa)) form a methyltransferase (CMet) domain region. In terms of domain architecture, Enoyl reductase (ER) spans 1779–2092 (GRVNSLHYAR…KGQHIGRVGV (314 aa)). The Ketoreductase (KR) domain occupies 2120–2297 (ASYLMVGGLG…ASVVDMGAVE (178 aa)). One can recognise a Carrier domain in the interval 2427–2504 (EAAKLFAVEI…ILGQYAANEV (78 aa)). Serine 2464 carries the post-translational modification O-(pantetheine 4'-phosphoryl)serine.

Pantetheine 4'-phosphate serves as cofactor.

The enzyme catalyses holo-[ACP] + 8 malonyl-CoA + acetyl-CoA + 5 AH2 + 8 NADPH + 16 H(+) = (3R)-hydroxyoctadeca-4,10-dienoyl-[ACP] + 5 A + 8 CO2 + 8 NADP(+) + 9 CoA + 7 H2O. It participates in secondary metabolite biosynthesis. In terms of biological role, highly reducing polyketide synthase; part of the gene cluster that mediates the biosynthesis of sphingofungins, bioactive molecules acting as sphingolipid inhibitors via inhibiting serine palmitoyl transferase (SPT). Within the pathway, sphB catalyzes the first step of sphingofungin biosynthesis by condensing 8 units of malonyl-CoA with one starter unit of acetyl-CoA, leading to an C18 polyketide precursor 3-hydroxyoctadeca-4,10-dienoyl-ACP containing one delta-6 desaturation and one delta-12 desaturation. The PKS sphB does not contain any putative thioesterase domain for releasing the nascent polyketide chain and it has been suggested that aminoacyl transferases can facilitate the polyketide chain release. The aminoacyl transferase sphA uses the sphB product to produce 3-keto-presphingofungin by adding an aminomalonate molecule. SphF then reduces the C-3 ketone of 3-keto-presphingofungin which leads to presphingofungin. The cytochrome P450 monooxygenase sphH converts presphingofungin into sphingofungin B1 which is further converted to sphingofungin B by the dioxygenase sphC. SphC is also able to convert presphingofungin into sphingofungin B2. The acetyltransferase sphE acetylates sphingofungin B to produce sphingofungin C, but can also convert sphingofungin B1 into sphingofungin C1 and sphingofungin B2 into sphingofungin C2. Finally, sphingofungin C can be spontaneously converted into sphingofungin D. The sequence is that of Highly reducing polyketide synthase sphB from Aspergillus fumigatus (strain CBS 144.89 / FGSC A1163 / CEA10) (Neosartorya fumigata).